The primary structure comprises 56 residues: Large ribosomal subunit protein bL32 (56 aa).

The disordered stretch occupies residues 1-40 (MAVQQNKKSRSKRGMRRSHDSLGTAQLSVDATSGELHRRH). Residues 7–16 (KKSRSKRGMR) are compositionally biased toward basic residues. Residues 21–31 (SLGTAQLSVDA) show a composition bias toward polar residues.

The protein belongs to the bacterial ribosomal protein bL32 family.

This is Large ribosomal subunit protein bL32 from Shewanella halifaxensis (strain HAW-EB4).